Reading from the N-terminus, the 174-residue chain is Co-chaperone protein HscB homolog (174 aa).

Positions N2–L74 constitute a J domain.

The protein belongs to the HscB family. As to quaternary structure, interacts with HscA and stimulates its ATPase activity.

Its function is as follows. Co-chaperone involved in the maturation of iron-sulfur cluster-containing proteins. Seems to help targeting proteins to be folded toward HscA. This is Co-chaperone protein HscB homolog from Shewanella baltica (strain OS155 / ATCC BAA-1091).